The primary structure comprises 137 residues: Cytochrome b5 (137 aa).

The Cytochrome b5 heme-binding domain occupies K6 to D82. Heme-binding residues include H41 and H65. The helical transmembrane segment at F108–I128 threads the bilayer.

The protein belongs to the cytochrome b5 family.

Its subcellular location is the endoplasmic reticulum membrane. The protein resides in the microsome membrane. In terms of biological role, membrane bound hemoprotein which function as an electron carrier for several membrane bound oxygenases. The protein is Cytochrome b5 of Oryza sativa subsp. japonica (Rice).